Reading from the N-terminus, the 322-residue chain is Quinolinate synthase (322 aa).

Residues His37 and Ser54 each contribute to the iminosuccinate site. Residue Cys99 participates in [4Fe-4S] cluster binding. Iminosuccinate-binding positions include 125–127 (YVN) and Ser142. Cys185 contributes to the [4Fe-4S] cluster binding site. Iminosuccinate contacts are provided by residues 211 to 213 (HPE) and Thr228. Cys278 is a binding site for [4Fe-4S] cluster.

The protein belongs to the quinolinate synthase family. Type 2 subfamily. It depends on [4Fe-4S] cluster as a cofactor.

Its subcellular location is the cytoplasm. It carries out the reaction iminosuccinate + dihydroxyacetone phosphate = quinolinate + phosphate + 2 H2O + H(+). It participates in cofactor biosynthesis; NAD(+) biosynthesis; quinolinate from iminoaspartate: step 1/1. Functionally, catalyzes the condensation of iminoaspartate with dihydroxyacetone phosphate to form quinolinate. This chain is Quinolinate synthase, found in Chlorobaculum tepidum (strain ATCC 49652 / DSM 12025 / NBRC 103806 / TLS) (Chlorobium tepidum).